The sequence spans 519 residues: MMNYVKSLGTYNTRNMEKESSKDLVQNEDTPLPVQKISMSLFHEIVFVFIACTAQLMTQAGLGQSIAPNNIIGKSLGTTNPGQLSWFPASYSLTVGTFILIAGRLGDIYGHKKMFVLGYIWFCIWSLISGFSYYAKSVIMFDVCRALTGIAPAFLLPNALALLGRVYPPGKKKNLIFALFGATAPNGFLLGSVFSGIFAQLSWWPWTYWTTAIVCIVFAIIGYFAIPHIEADEVEEKQKFDYLGAFFGVSGLVLINFSWNQGPVVGWQVPYVYILLIIGFLSLVVFVLVEKRVVQPILAPSMMNSEMGCVLICVAAGWACFGIWMYYLWQFLENLRFATPLLVTAQLTPVGISGCAAALTTGYLLKRLKPTKIMVVSMIAFTVGTILIATAPIHQTYWAQTFVSIIVTPWGMDMSFPAATLMLSDFVPKQHQGIAASLVSTVVNYSISIGLGIAGTVETHLNHKGVDLIRGYRSAWYMGTGFGGLGVCVAILTVFASYLKVGQQKSPKFPLIMKNTKAV.

Transmembrane regions (helical) follow at residues 37–57 (ISMSLFHEIVFVFIACTAQLM), 82–102 (GQLSWFPASYSLTVGTFILIA), 114–134 (MFVLGYIWFCIWSLISGFSYY), 146–166 (ALTGIAPAFLLPNALALLGRV), 175–195 (LIFALFGATAPNGFLLGSVFS), 209–229 (WTTAIVCIVFAIIGYFAIPHI), 240–260 (FDYLGAFFGVSGLVLINFSWN), 269–289 (VPYVYILLIIGFLSLVVFVLV), 309–329 (CVLICVAAGWACFGIWMYYLW), 337–357 (FATPLLVTAQLTPVGISGCAA), 373–393 (IMVVSMIAFTVGTILIATAPI), 402–422 (FVSIIVTPWGMDMSFPAATLM), 434–454 (IAASLVSTVVNYSISIGLGIA), and 475–495 (AWYMGTGFGGLGVCVAILTVF).

This sequence belongs to the major facilitator superfamily.

It localises to the endoplasmic reticulum. Its subcellular location is the membrane. This is an uncharacterized protein from Schizosaccharomyces pombe (strain 972 / ATCC 24843) (Fission yeast).